The following is a 455-amino-acid chain: tRNA modification GTPase MnmE (455 aa).

Arg25, Glu85, and Arg124 together coordinate (6S)-5-formyl-5,6,7,8-tetrahydrofolate. The 155-residue stretch at 221–375 (GLSTAIIGRP…IEERINKLFF (155 aa)) folds into the TrmE-type G domain. Residue Asn231 coordinates K(+). GTP contacts are provided by residues 231–236 (NVGKSS), 250–256 (TDIEGTT), and 275–278 (DTAG). Residue Ser235 participates in Mg(2+) binding. Residues Thr250, Ile252, and Thr255 each coordinate K(+). A Mg(2+)-binding site is contributed by Thr256. Lys455 serves as a coordination point for (6S)-5-formyl-5,6,7,8-tetrahydrofolate.

The protein belongs to the TRAFAC class TrmE-Era-EngA-EngB-Septin-like GTPase superfamily. TrmE GTPase family. As to quaternary structure, homodimer. Heterotetramer of two MnmE and two MnmG subunits. The cofactor is K(+).

Its subcellular location is the cytoplasm. Exhibits a very high intrinsic GTPase hydrolysis rate. Involved in the addition of a carboxymethylaminomethyl (cmnm) group at the wobble position (U34) of certain tRNAs, forming tRNA-cmnm(5)s(2)U34. The polypeptide is tRNA modification GTPase MnmE (Streptococcus mutans serotype c (strain ATCC 700610 / UA159)).